A 141-amino-acid polypeptide reads, in one-letter code: Large-conductance mechanosensitive channel (141 aa).

2 helical membrane-spanning segments follow: residues 21-41 and 85-105; these read VGVI…GDLI and GSFL…FMMV.

Belongs to the MscL family. As to quaternary structure, homopentamer.

It is found in the cell inner membrane. In terms of biological role, channel that opens in response to stretch forces in the membrane lipid bilayer. May participate in the regulation of osmotic pressure changes within the cell. The sequence is that of Large-conductance mechanosensitive channel from Dechloromonas aromatica (strain RCB).